Consider the following 305-residue polypeptide: Dermonecrotic toxin LiSicTox-betaID1 (305 aa).

An N-terminal signal peptide occupies residues Met1–Gly18. The propeptide occupies Thr19–Arg26. Residue His38 is part of the active site. Residues Glu58 and Asp60 each coordinate Mg(2+). Residue His74 is the Nucleophile of the active site. Disulfide bonds link Cys78–Cys84 and Cys80–Cys223. Asp118 contacts Mg(2+).

Belongs to the arthropod phospholipase D family. Class II subfamily. Class IIb sub-subfamily. Requires Mg(2+) as cofactor. In terms of tissue distribution, expressed by the venom gland.

It localises to the secreted. The enzyme catalyses an N-(acyl)-sphingosylphosphocholine = an N-(acyl)-sphingosyl-1,3-cyclic phosphate + choline. It carries out the reaction an N-(acyl)-sphingosylphosphoethanolamine = an N-(acyl)-sphingosyl-1,3-cyclic phosphate + ethanolamine. It catalyses the reaction a 1-acyl-sn-glycero-3-phosphocholine = a 1-acyl-sn-glycero-2,3-cyclic phosphate + choline. The catalysed reaction is a 1-acyl-sn-glycero-3-phosphoethanolamine = a 1-acyl-sn-glycero-2,3-cyclic phosphate + ethanolamine. Functionally, dermonecrotic toxins cleave the phosphodiester linkage between the phosphate and headgroup of certain phospholipids (sphingolipid and lysolipid substrates), forming an alcohol (often choline) and a cyclic phosphate. This toxin acts on sphingomyelin (SM) with low activity. It may also act on ceramide phosphoethanolamine (CPE), lysophosphatidylcholine (LPC) and lysophosphatidylethanolamine (LPE), but not on lysophosphatidylserine (LPS), and lysophosphatidylglycerol (LPG). It acts by transphosphatidylation, releasing exclusively cyclic phosphate products as second products. Has no or weak activities in inducing dermonecrosis, hemolysis, inflammatory response, platelet aggregation and increase in vessel permeability. In vivo, shows no lethality when injected at higher dose into mice. This is Dermonecrotic toxin LiSicTox-betaID1 from Loxosceles intermedia (Brown spider).